Here is a 156-residue protein sequence, read N- to C-terminus: Small ribosomal subunit protein uS7 (156 aa).

Belongs to the universal ribosomal protein uS7 family. In terms of assembly, part of the 30S ribosomal subunit. Contacts proteins S9 and S11.

In terms of biological role, one of the primary rRNA binding proteins, it binds directly to 16S rRNA where it nucleates assembly of the head domain of the 30S subunit. Is located at the subunit interface close to the decoding center, probably blocks exit of the E-site tRNA. This is Small ribosomal subunit protein uS7 from Shewanella frigidimarina (strain NCIMB 400).